The chain runs to 187 residues: Adenylate kinase (187 aa).

10–15 (GSGKGT) lines the ATP pocket. The tract at residues 30–59 (STGDLLRAEVAAGSPLGVKAKEVMARGDLV) is NMP. Residues threonine 31, arginine 36, 57–59 (DLV), 85–88 (GYPR), and glutamine 92 each bind AMP. The tract at residues 126-136 (GRAKAEGREDD) is LID. Arginine 127 is an ATP binding site. Residues arginine 133 and arginine 144 each contribute to the AMP site. Glycine 172 is a binding site for ATP.

Belongs to the adenylate kinase family. In terms of assembly, monomer.

It is found in the cytoplasm. It carries out the reaction AMP + ATP = 2 ADP. It participates in purine metabolism; AMP biosynthesis via salvage pathway; AMP from ADP: step 1/1. Functionally, catalyzes the reversible transfer of the terminal phosphate group between ATP and AMP. Plays an important role in cellular energy homeostasis and in adenine nucleotide metabolism. In Xanthomonas campestris pv. campestris (strain B100), this protein is Adenylate kinase.